The following is a 128-amino-acid chain: Large ribosomal subunit protein uL24 (128 aa).

Positions 105 to 128 (KAKSRQVGKEKGKYKEETIEKMQE) are disordered.

The protein belongs to the universal ribosomal protein uL24 family. Component of the large ribosomal subunit.

It localises to the cytoplasm. Component of the large ribosomal subunit. The ribosome is a large ribonucleoprotein complex responsible for the synthesis of proteins in the cell. The chain is Large ribosomal subunit protein uL24 (RPL26) from Gallus gallus (Chicken).